The chain runs to 253 residues: Phosphoribosylaminoimidazole-succinocarboxamide synthase (253 aa).

Belongs to the SAICAR synthetase family.

The enzyme catalyses 5-amino-1-(5-phospho-D-ribosyl)imidazole-4-carboxylate + L-aspartate + ATP = (2S)-2-[5-amino-1-(5-phospho-beta-D-ribosyl)imidazole-4-carboxamido]succinate + ADP + phosphate + 2 H(+). It participates in purine metabolism; IMP biosynthesis via de novo pathway; 5-amino-1-(5-phospho-D-ribosyl)imidazole-4-carboxamide from 5-amino-1-(5-phospho-D-ribosyl)imidazole-4-carboxylate: step 1/2. This is Phosphoribosylaminoimidazole-succinocarboxamide synthase from Parvibaculum lavamentivorans (strain DS-1 / DSM 13023 / NCIMB 13966).